The primary structure comprises 391 residues: MRKLGPVTIDPRRHDAVLFDTTLDATQELVRQLQEVGVGTGVFGSGLDVPIVAAGRLAVRPGRCVVVSAHSAGVTAARESGFALIIGVDRTGCRDALRRDGADTVVTDLSEVSVRTGDRRMSQLPDALQALGLADGLVARQPAVFFDFDGTLSDIVEDPDAAWLAPGALEALQKLAARCPIAVLSGRDLADVTQRVGLPGIWYAGSHGFELTAPDGTHHQNDAAAAAIPVLKQAAAELRQQLGPFPGVVVEHKRFGVAVHYRNAARDRVGEVAAAVRTAEQRHALRVTTGREVIELRPDVDWDKGKTLLWVLDHLPHSGSAPLVPIYLGDDITDEDAFDVVGPHGVPIVVRHTDDGDRATAALFALDSPARVAEFTDRLARQLREAPLRAT.

D147 (nucleophile) is an active-site residue. Mg(2+) is bound by residues D147, D149, and D330. 147–149 (DFD) provides a ligand contact to substrate.

It belongs to the trehalose phosphatase family. Mg(2+) is required as a cofactor.

The catalysed reaction is alpha,alpha-trehalose 6-phosphate + H2O = alpha,alpha-trehalose + phosphate. It participates in glycan biosynthesis; trehalose biosynthesis. Its function is as follows. Removes the phosphate from trehalose 6-phosphate to produce free trehalose. The chain is Trehalose-phosphate phosphatase (otsB) from Mycobacterium bovis (strain ATCC BAA-935 / AF2122/97).